The sequence spans 678 residues: Protein KHNYN (678 aa).

Ser-10 is modified (phosphoserine). 2 disordered regions span residues 222-251 (QGVR…ARGD) and 347-407 (LHNG…ARGG). A compositionally biased stretch (pro residues) spans 355–367 (PRVPSPPPAPEPP). A Phosphoserine modification is found at Ser-359. Residues 370 to 388 (CGDRGDCGDRGDVGDRGDK) are compositionally biased toward basic and acidic residues. Residues 437-589 (LRHIVIDGSN…LGRNGPTLDE (153 aa)) form the RNase NYN domain. The disordered stretch occupies residues 595–633 (ARTQGSSKAQHPSRGFAEHGKQQQGREEEKGSGGIRKTR). Residues 610–633 (FAEHGKQQQGREEEKGSGGIRKTR) show a composition bias toward basic and acidic residues.

Belongs to the N4BP1 family.

This Homo sapiens (Human) protein is Protein KHNYN (KHNYN).